A 200-amino-acid chain; its full sequence is MTDKLATLKAALEKALGNRVQSLTESVGELTLVVKAADYLDAMRTLRDDASLKFEQLMDLCGVDYADYGDGAWNGPRFAAVSHLLSITHNWRVRVRVFAPDDDLPVVSSVTTIWNSADWFEREAFDLYGLVFEGHPDLRRILTDYGFIGHPFRKDFPVSGYVEMRYDPVQRRVVYQPVTIEPREITPRVIREDQYGGLKH.

Belongs to the complex I 30 kDa subunit family. In terms of assembly, NDH-1 is composed of 14 different subunits. Subunits NuoB, C, D, E, F, and G constitute the peripheral sector of the complex.

It is found in the cell inner membrane. The enzyme catalyses a quinone + NADH + 5 H(+)(in) = a quinol + NAD(+) + 4 H(+)(out). Its function is as follows. NDH-1 shuttles electrons from NADH, via FMN and iron-sulfur (Fe-S) centers, to quinones in the respiratory chain. The immediate electron acceptor for the enzyme in this species is believed to be ubiquinone. Couples the redox reaction to proton translocation (for every two electrons transferred, four hydrogen ions are translocated across the cytoplasmic membrane), and thus conserves the redox energy in a proton gradient. The sequence is that of NADH-quinone oxidoreductase subunit C from Ralstonia pickettii (strain 12J).